Consider the following 291-residue polypeptide: Nucleotide-binding protein Ccel_2290 (291 aa).

8 to 15 provides a ligand contact to ATP; that stretch reads GMSGAGKS. 59–62 serves as a coordination point for GTP; the sequence is DIRG.

Belongs to the RapZ-like family.

Displays ATPase and GTPase activities. The chain is Nucleotide-binding protein Ccel_2290 from Ruminiclostridium cellulolyticum (strain ATCC 35319 / DSM 5812 / JCM 6584 / H10) (Clostridium cellulolyticum).